The sequence spans 181 residues: ATP synthase subunit delta (181 aa).

It belongs to the ATPase delta chain family. As to quaternary structure, F-type ATPases have 2 components, F(1) - the catalytic core - and F(0) - the membrane proton channel. F(1) has five subunits: alpha(3), beta(3), gamma(1), delta(1), epsilon(1). F(0) has three main subunits: a(1), b(2) and c(10-14). The alpha and beta chains form an alternating ring which encloses part of the gamma chain. F(1) is attached to F(0) by a central stalk formed by the gamma and epsilon chains, while a peripheral stalk is formed by the delta and b chains.

It localises to the cell inner membrane. Functionally, f(1)F(0) ATP synthase produces ATP from ADP in the presence of a proton or sodium gradient. F-type ATPases consist of two structural domains, F(1) containing the extramembraneous catalytic core and F(0) containing the membrane proton channel, linked together by a central stalk and a peripheral stalk. During catalysis, ATP synthesis in the catalytic domain of F(1) is coupled via a rotary mechanism of the central stalk subunits to proton translocation. This protein is part of the stalk that links CF(0) to CF(1). It either transmits conformational changes from CF(0) to CF(1) or is implicated in proton conduction. The chain is ATP synthase subunit delta from Protochlamydia amoebophila (strain UWE25).